Reading from the N-terminus, the 168-residue chain is Ecotin (168 aa).

An N-terminal signal peptide occupies residues Met1–Ala21. Residues Cys76 and Cys113 are joined by a disulfide bond.

The protein belongs to the protease inhibitor I11 (ecotin) family. As to quaternary structure, homodimer.

The protein resides in the periplasm. Functionally, general inhibitor of pancreatic serine proteases: inhibits chymotrypsin, trypsin, elastases, factor X, kallikrein as well as a variety of other proteases. This chain is Ecotin, found in Yersinia enterocolitica serotype O:8 / biotype 1B (strain NCTC 13174 / 8081).